A 321-amino-acid polypeptide reads, in one-letter code: AA9 family lytic polysaccharide monooxygenase A (321 aa).

Residues 1-21 (MFRAQSFLPVLALVLRVAAHG) form the signal peptide. Histidine 20 serves as a coordination point for Cu(2+). Cysteines 71 and 197 form a disulfide. Asparagine 72 carries N-linked (GlcNAc...) asparagine glycosylation. A Cu(2+)-binding site is contributed by histidine 105. An N-linked (GlcNAc...) asparagine glycan is attached at asparagine 157. Residues histidine 183 and glutamine 192 each coordinate O2. Position 194 (tyrosine 194) interacts with Cu(2+). The segment at 278–306 (SSSAAATQSSSAAPSSSAIGTSTASSAAA) is disordered. A lipid anchor (GPI-anchor amidated serine) is attached at serine 293. Positions 294–321 (SAIGTSTASSAAASGTAIVDANTCMNSA) are cleaved as a propeptide — removed in mature form.

It belongs to the polysaccharide monooxygenase AA9 family. The cofactor is Cu(2+).

Its subcellular location is the cell membrane. It catalyses the reaction [(1-&gt;4)-beta-D-glucosyl]n+m + reduced acceptor + O2 = 4-dehydro-beta-D-glucosyl-[(1-&gt;4)-beta-D-glucosyl]n-1 + [(1-&gt;4)-beta-D-glucosyl]m + acceptor + H2O.. Functionally, lytic polysaccharide monooxygenase (LPMO) that depolymerizes crystalline and amorphous polysaccharides via the oxidation of scissile alpha- or beta-(1-4)-glycosidic bonds, yielding C1 or C4 oxidation products. Catalysis by LPMOs requires the reduction of the active-site copper from Cu(II) to Cu(I) by a reducing agent and H(2)O(2) or O(2) as a cosubstrate. Has broad specificity, cleaving at any position along the beta-glucan backbone of xyloglucan, regardless of substitutions. Shows minor activity on glucomannan. The sequence is that of AA9 family lytic polysaccharide monooxygenase A from Gloeophyllum trabeum (strain ATCC 11539 / FP-39264 / Madison 617) (Brown rot fungus).